The sequence spans 236 residues: UPF0502 protein Bcep1808_3727 (236 aa).

It belongs to the UPF0502 family.

The sequence is that of UPF0502 protein Bcep1808_3727 from Burkholderia vietnamiensis (strain G4 / LMG 22486) (Burkholderia cepacia (strain R1808)).